A 123-amino-acid polypeptide reads, in one-letter code: Large ribosomal subunit protein uL18 (123 aa).

Belongs to the universal ribosomal protein uL18 family. As to quaternary structure, part of the 50S ribosomal subunit; part of the 5S rRNA/L5/L18/L25 subcomplex. Contacts the 5S and 23S rRNAs.

Functionally, this is one of the proteins that bind and probably mediate the attachment of the 5S RNA into the large ribosomal subunit, where it forms part of the central protuberance. This chain is Large ribosomal subunit protein uL18, found in Chlamydia muridarum (strain MoPn / Nigg).